The sequence spans 620 residues: Glutathione-regulated potassium-efflux system protein KefC (620 aa).

12 consecutive transmembrane segments (helical) span residues 4–24, 26–46, 54–74, 86–106, 114–134, 149–169, 178–198, 218–238, 271–291, 296–316, 326–346, and 359–379; these read HTLIQALIYLGSAALIVPVAV, LGLGSVLGYLIAGGLIGPWGL, AILHFAEIGVVLMLFVIGLEL, VFGGGALQMGACGLLLGGFCV, VALLIGLTLALSSTAIAMQAM, FAVLLFQDIAAIPLVAMIPLL, ASAFFLSALKVVGALALVVLL, VFSAVALFLVFGFGLLLEEAG, LLLGLFFIGVGMSIDFGTLVA, VLTLLFGFLIIKTVTLWLVAK, RWFAVLLGQGSEFAFVIFGAA, and ALTLAVALSMAATPLLLVLLT. The region spanning 399-518 is the RCK N-terminal domain; sequence QPRVIIAGFG…AGVAQPERET (120 aa). The segment at 596–620 is disordered; the sequence is HGWQGTREGKHTGNDADEPEVKPQP.

This sequence belongs to the monovalent cation:proton antiporter 2 (CPA2) transporter (TC 2.A.37) family. KefC subfamily. As to quaternary structure, homodimer. Interacts with the regulatory subunit KefF.

The protein localises to the cell inner membrane. Its function is as follows. Pore-forming subunit of a potassium efflux system that confers protection against electrophiles. Catalyzes K(+)/H(+) antiport. The polypeptide is Glutathione-regulated potassium-efflux system protein KefC (Cronobacter sakazakii (strain ATCC BAA-894) (Enterobacter sakazakii)).